We begin with the raw amino-acid sequence, 270 residues long: Tryptophan synthase alpha chain (270 aa).

Catalysis depends on proton acceptor residues E49 and D60.

The protein belongs to the TrpA family. Tetramer of two alpha and two beta chains.

The catalysed reaction is (1S,2R)-1-C-(indol-3-yl)glycerol 3-phosphate + L-serine = D-glyceraldehyde 3-phosphate + L-tryptophan + H2O. It participates in amino-acid biosynthesis; L-tryptophan biosynthesis; L-tryptophan from chorismate: step 5/5. In terms of biological role, the alpha subunit is responsible for the aldol cleavage of indoleglycerol phosphate to indole and glyceraldehyde 3-phosphate. In Buchnera aphidicola subsp. Melaphis rhois, this protein is Tryptophan synthase alpha chain.